A 1257-amino-acid chain; its full sequence is LIM domain kinase 1 (1257 aa).

The interval 1–24 is disordered; that stretch reads MHHQQRLRANGGRGGTGLGAGSGP. Positions 1–147 are interaction with LATS1; that stretch reads MHHQQRLRAN…ERSKLYCGQC (147 aa). A compositionally biased stretch (gly residues) spans 11–24; that stretch reads GGRGGTGLGAGSGP. 2 consecutive LIM zinc-binding domains span residues 31-93 and 94-154; these read PLCA…RFGD and ACQQ…RSCQ. The 101-residue stretch at 174 to 274 folds into the PDZ domain; that stretch reads LVEIPKDATP…MLQLTVEHDP (101 aa). Residues 401–686 form the Protein kinase domain; the sequence is LVIGEKLGEG…PCFETLHVWL (286 aa). ATP-binding positions include 407 to 415 and Lys430; that span reads LGEGFFGKV. Residue Asp522 is part of the active site. Disordered regions lie at residues 552–587, 759–811, and 881–900; these read LPSG…RQRR, QDIP…ERAL, and EELL…QHHR. The segment covering 794–811 has biased composition (basic and acidic residues); sequence QEERRNLTPDTESKERAL. Residue Ser1000 is modified to Phosphoserine. Disordered regions lie at residues 1010-1037, 1085-1182, and 1212-1257; these read AKQL…NPPL, SAQQ…EKVH, and AAGT…NTRC. Composition is skewed to polar residues over residues 1085–1095 and 1113–1125; these read SAQQQRTSSNH and RTGS…SNCV. Low complexity-rich tracts occupy residues 1126–1137 and 1145–1166; these read SPTRSSRPGSPT and TAAT…HQQQ.

The protein belongs to the protein kinase superfamily. TKL Ser/Thr protein kinase family. Interacts with LATS1, and this interaction inhibits phosphorylation of tsr/cofilin. Post-translationally, phosphorylated on serine and/or threonine residues by ROCK1. Phosphorylated by PAK4 resulting in increased LIMK1 ability to phosphorylate cofilin. May be dephosphorylated and inactivated by SSH1. As to expression, expressed throughout the imaginal disks of the eye, leg and wing.

It is found in the cytoplasm. The protein resides in the cleavage furrow. It localises to the midbody. The catalysed reaction is L-seryl-[protein] + ATP = O-phospho-L-seryl-[protein] + ADP + H(+). It carries out the reaction L-threonyl-[protein] + ATP = O-phospho-L-threonyl-[protein] + ADP + H(+). Functionally, protein kinase which regulates actin filament dynamics. Phosphorylates and inactivates the actin binding/depolymerizing factor tsr/cofilin, thereby stabilizing the actin cytoskeleton. Modulation of actin cytoskeleton dynamics may be essential for imaginal disk morphogenesis and axon guidance. The polypeptide is LIM domain kinase 1 (LIMK1) (Drosophila melanogaster (Fruit fly)).